The sequence spans 292 residues: 4-hydroxy-tetrahydrodipicolinate synthase (292 aa).

Thr-45 serves as a coordination point for pyruvate. Residue Tyr-133 is the Proton donor/acceptor of the active site. Lys-161 serves as the catalytic Schiff-base intermediate with substrate. Pyruvate is bound at residue Ile-203.

This sequence belongs to the DapA family. As to quaternary structure, homotetramer; dimer of dimers.

The protein resides in the cytoplasm. The enzyme catalyses L-aspartate 4-semialdehyde + pyruvate = (2S,4S)-4-hydroxy-2,3,4,5-tetrahydrodipicolinate + H2O + H(+). Its pathway is amino-acid biosynthesis; L-lysine biosynthesis via DAP pathway; (S)-tetrahydrodipicolinate from L-aspartate: step 3/4. Its function is as follows. Catalyzes the condensation of (S)-aspartate-beta-semialdehyde [(S)-ASA] and pyruvate to 4-hydroxy-tetrahydrodipicolinate (HTPA). The sequence is that of 4-hydroxy-tetrahydrodipicolinate synthase from Escherichia fergusonii (strain ATCC 35469 / DSM 13698 / CCUG 18766 / IAM 14443 / JCM 21226 / LMG 7866 / NBRC 102419 / NCTC 12128 / CDC 0568-73).